The chain runs to 573 residues: 2-isopropylmalate synthase (573 aa).

The region spanning 37–314 (PRWLSTDLRD…DPQIDFSNID (278 aa)) is the Pyruvate carboxyltransferase domain. Mg(2+) contacts are provided by Asp46, His253, His255, and Asn289. The interval 456–573 (NPRNPWGRIQ…VVSAVNRAAR (118 aa)) is regulatory domain.

Belongs to the alpha-IPM synthase/homocitrate synthase family. LeuA type 2 subfamily. As to quaternary structure, homodimer. Mg(2+) serves as cofactor.

The protein resides in the cytoplasm. The catalysed reaction is 3-methyl-2-oxobutanoate + acetyl-CoA + H2O = (2S)-2-isopropylmalate + CoA + H(+). It functions in the pathway amino-acid biosynthesis; L-leucine biosynthesis; L-leucine from 3-methyl-2-oxobutanoate: step 1/4. Functionally, catalyzes the condensation of the acetyl group of acetyl-CoA with 3-methyl-2-oxobutanoate (2-ketoisovalerate) to form 3-carboxy-3-hydroxy-4-methylpentanoate (2-isopropylmalate). This chain is 2-isopropylmalate synthase, found in Streptomyces avermitilis (strain ATCC 31267 / DSM 46492 / JCM 5070 / NBRC 14893 / NCIMB 12804 / NRRL 8165 / MA-4680).